The sequence spans 87 residues: UPF0335 protein RL4065 (87 aa).

The protein belongs to the UPF0335 family.

The sequence is that of UPF0335 protein RL4065 from Rhizobium johnstonii (strain DSM 114642 / LMG 32736 / 3841) (Rhizobium leguminosarum bv. viciae).